Consider the following 411-residue polypeptide: CinA-like protein (411 aa).

The protein belongs to the CinA family.

In Dictyoglomus turgidum (strain DSM 6724 / Z-1310), this protein is CinA-like protein.